Reading from the N-terminus, the 545-residue chain is Prolyl 3-hydroxylase OGFOD1 (545 aa).

The tract at residues 1-23 is disordered; the sequence is MNGKRPADPGPARPMKKGKKQVS. One can recognise a Fe2OG dioxygenase domain in the interval 137 to 239; the sequence is PTIDMSCAKY…RLSISGWFYG (103 aa). Positions 155 and 157 each coordinate Fe cation. Tyrosine 169 provides a ligand contact to 2-oxoglutarate. Histidine 218 contacts Fe cation. Residue arginine 230 coordinates 2-oxoglutarate. Acidic residues predominate over residues 371-380; that stretch reads SEDDETEEKG. Residues 371 to 437 form a disordered region; the sequence is SEDDETEEKG…EAKKESSVPM (67 aa). Over residues 383 to 393 the composition is skewed to low complexity; it reads ETASAAAGTEE. Positions 402-417 are enriched in polar residues; the sequence is PENNQVAAGSHSQENG.

The protein belongs to the TPA1 family. As to quaternary structure, monomer. Requires Fe(2+) as cofactor. It depends on L-ascorbate as a cofactor.

The protein localises to the cytoplasm. It localises to the nucleus. It catalyses the reaction [ribosomal protein uS12]-L-proline + 2-oxoglutarate + O2 = [ribosomal protein uS12]-(3S)-3-hydroxy-L-proline + succinate + CO2. Functionally, prolyl 3-hydroxylase that catalyzes 3-hydroxylation of 'Pro-62' of small ribosomal subunit uS12 (RPS23), thereby regulating protein translation termination efficiency. Involved in stress granule formation. This is Prolyl 3-hydroxylase OGFOD1 (Ogfod1) from Mus musculus (Mouse).